We begin with the raw amino-acid sequence, 275 residues long: NADPH-dependent 7-cyano-7-deazaguanine reductase (275 aa).

Residue valine 81 to serine 83 participates in substrate binding. Serine 83–lysine 84 lines the NADPH pocket. The active-site Thioimide intermediate is the cysteine 182. Aspartate 189 functions as the Proton donor in the catalytic mechanism. Position 221–222 (histidine 221–glutamate 222) interacts with substrate. An NADPH-binding site is contributed by arginine 250–glycine 251.

Belongs to the GTP cyclohydrolase I family. QueF type 2 subfamily. As to quaternary structure, homodimer.

Its subcellular location is the cytoplasm. It carries out the reaction 7-aminomethyl-7-carbaguanine + 2 NADP(+) = 7-cyano-7-deazaguanine + 2 NADPH + 3 H(+). It functions in the pathway tRNA modification; tRNA-queuosine biosynthesis. Catalyzes the NADPH-dependent reduction of 7-cyano-7-deazaguanine (preQ0) to 7-aminomethyl-7-deazaguanine (preQ1). This chain is NADPH-dependent 7-cyano-7-deazaguanine reductase, found in Polaromonas sp. (strain JS666 / ATCC BAA-500).